The primary structure comprises 318 residues: MLNSFDSAYHALCEEILEIGNQRDDRTHTGTFSKFGHQLRFDLSKGFPLLTTKKVSFKLIATELLWFIKGDTNIQYLLKYNNNIWNEWAFEKYVQSNDYHGPDMTNFGHRALQDDEFNELYKEEMSKFKQHILNDDSFAKKYGDLGNVYGKQWRDWVDKEGNHFDQLKTVIEQIKNSPNSRRHIVSAWNPTEIDSMALPPCHTMFQFYVQDGRLSCQLYQRSADIFLGVPFNIASYALLTHLIAKECNLEVGEFVHTFGDAHIYSNHIEAIKTQLSRNSFDPPTLKINSNASIFDINYEDLELIGYNSHPAIKAPIAV.

DUMP contacts are provided by residues arginine 26 and 181–182; that span reads RR. The Nucleophile role is filled by cysteine 201. Residues 221–224, asparagine 232, and 262–264 contribute to the dUMP site; these read RSAD and HIY. Residue aspartate 224 participates in (6R)-5,10-methylene-5,6,7,8-tetrahydrofolate binding. Position 317 (alanine 317) interacts with (6R)-5,10-methylene-5,6,7,8-tetrahydrofolate.

Belongs to the thymidylate synthase family. Bacterial-type ThyA subfamily. As to quaternary structure, homodimer.

The protein localises to the cytoplasm. It catalyses the reaction dUMP + (6R)-5,10-methylene-5,6,7,8-tetrahydrofolate = 7,8-dihydrofolate + dTMP. It participates in pyrimidine metabolism; dTTP biosynthesis. Its function is as follows. Catalyzes the reductive methylation of 2'-deoxyuridine-5'-monophosphate (dUMP) to 2'-deoxythymidine-5'-monophosphate (dTMP) while utilizing 5,10-methylenetetrahydrofolate (mTHF) as the methyl donor and reductant in the reaction, yielding dihydrofolate (DHF) as a by-product. This enzymatic reaction provides an intracellular de novo source of dTMP, an essential precursor for DNA biosynthesis. The sequence is that of Thymidylate synthase from Staphylococcus haemolyticus (strain JCSC1435).